Consider the following 317-residue polypeptide: Carbonic anhydrase 6 (317 aa).

The N-terminal stretch at 1–17 is a signal peptide; it reads MRALVSVVSLFFLGIQA. Positions 19–277 constitute an Alpha-carbonic anhydrase domain; sequence SDWSYSGDDG…NNHRVVEANF (259 aa). A disulfide bridge connects residues C41 and C223. The active-site Proton donor/acceptor is the H84. Zn(2+)-binding residues include H110, H112, and H137. 219 to 220 serves as a coordination point for substrate; that stretch reads TT. An N-linked (GlcNAc...) asparagine glycan is attached at N255.

This sequence belongs to the alpha-carbonic anhydrase family. Zn(2+) serves as cofactor. Major constituent of saliva.

Its subcellular location is the secreted. It catalyses the reaction hydrogencarbonate + H(+) = CO2 + H2O. Its function is as follows. Reversible hydration of carbon dioxide. Its role in saliva is unknown. This Mus musculus (Mouse) protein is Carbonic anhydrase 6 (Ca6).